The chain runs to 970 residues: ATP-dependent DNA helicase DDX11 (970 aa).

The Helicase ATP-binding domain maps to 9–445 (GAIHFPFPFT…KNLMYLKQIL (437 aa)). 44 to 51 (SPTGTGKS) contacts ATP. Ser-262 carries the post-translational modification Phosphoserine. The [4Fe-4S] cluster site is built by Cys-267 and Cys-285. Residues 289–304 (QRSRHEKKKGAEEEKP) are compositionally biased toward basic and acidic residues. The tract at residues 289-312 (QRSRHEKKKGAEEEKPKRRRQEKQ) is disordered. Positions 315 and 350 each coordinate [4Fe-4S] cluster. The short motif at 393-396 (DEAH) is the DEAH box element. The tract at residues 818–849 (TLSPRPGTPREGSGGEPVHEGRQPVHRQGHQA) is disordered.

This sequence belongs to the DEAD box helicase family. DEAH subfamily. DDX11/CHL1 sub-subfamily. Associates with the CTF18-RFC complex. Associates with a cohesin complex composed of RAD21, SMC1 proteins and SMC3. Interacts with CHTF18. Interacts with DSCC1. Interacts with FEN1; this interaction is direct and increases flap endonuclease activity of FEN1. Interacts with PCNA. Interacts with POLR1A and UBTF. Interacts with RAD21, SMC1 proteins and SMC3. Interacts with RFC2. Interacts with TIMELESS; this interaction increases recruitment of both proteins onto chromatin in response to replication stress induction by hydroxyurea. As to quaternary structure, (Microbial infection) Interacts with bovine papillomavirus type 1 regulatory protein E2; this interaction stimulates the recruitment of E2 onto mitotic chromosomes. Mg(2+) serves as cofactor. The cofactor is [4Fe-4S] cluster. Expressed in melanoma cells. Not detected in epidermal melanocytes of normal skin (at protein level). Highly expressed in spleen, B-cells, thymus, testis, ovary, small intestine and pancreas. Very low expression seen in brain. Expressed in dividing cells and/or cells undergoing high levels of recombination. No expression detected in cells signaled to terminally differentiate. Expressed weakly in keratinocytes.

It is found in the nucleus. It localises to the nucleolus. Its subcellular location is the cytoplasm. The protein resides in the cytoskeleton. The protein localises to the spindle pole. It is found in the midbody. It localises to the microtubule organizing center. Its subcellular location is the centrosome. The protein resides in the chromosome. It carries out the reaction Couples ATP hydrolysis with the unwinding of duplex DNA at the replication fork by translocating in the 5'-3' direction. This creates two antiparallel DNA single strands (ssDNA). The leading ssDNA polymer is the template for DNA polymerase III holoenzyme which synthesizes a continuous strand.. It catalyses the reaction ATP + H2O = ADP + phosphate + H(+). With respect to regulation, ATPase activity is stimulated by high magnesium salt levels (up to a 0.1 M), and potassium salts (glutamate, chloride or acetate) are more effective than the corresponding sodium salts. ATPase activity is enhanced by the long non-coding RNA (lncRNA) cohesion regulator noncoding RNA (CONCR). Double-stranded DNA helicase activity is maximal with magnesium ions at low concentrations (0.5-1 mM) whereas is markedly inhibited at higher levels (5 mM and above). Double-stranded DNA helicase activity is stimulated by 25-50 mM potassium acetate, stimulated to a lesser extent by 25 mM of ammonium acetate, and markedly inhibited by sodium acetate. Its function is as follows. DNA-dependent ATPase and ATP-dependent DNA helicase that participates in various functions in genomic stability, including DNA replication, DNA repair and heterochromatin organization as well as in ribosomal RNA synthesis. Its double-stranded DNA helicase activity requires either a minimal 5'-single-stranded tail length of approximately 15 nt (flap substrates) or 10 nt length single-stranded gapped DNA substrates of a partial duplex DNA structure for helicase loading and translocation along DNA in a 5' to 3' direction. The helicase activity is capable of displacing duplex regions up to 100 bp, which can be extended up to 500 bp by the replication protein A (RPA) or the cohesion CTF18-replication factor C (Ctf18-RFC) complex activities. Also shows ATPase- and helicase activities on substrates that mimic key DNA intermediates of replication, repair and homologous recombination reactions, including forked duplex, anti-parallel G-quadruplex and three-stranded D-loop DNA molecules. Plays a role in DNA double-strand break (DSB) repair at the DNA replication fork during DNA replication recovery from DNA damage. Recruited with TIMELESS factor upon DNA-replication stress response at DNA replication fork to preserve replication fork progression, and hence ensure DNA replication fidelity. Also cooperates with TIMELESS factor during DNA replication to regulate proper sister chromatid cohesion and mitotic chromosome segregation. Stimulates 5'-single-stranded DNA flap endonuclease activity of FEN1 in an ATP- and helicase-independent manner; and hence it may contribute in Okazaki fragment processing at DNA replication fork during lagging strand DNA synthesis. Its ability to function at DNA replication fork is modulated by its binding to long non-coding RNA (lncRNA) cohesion regulator non-coding RNA DDX11-AS1/CONCR, which is able to increase both DDX11 ATPase activity and binding to DNA replicating regions. Also plays a role in heterochromatin organization. Involved in rRNA transcription activation through binding to active hypomethylated rDNA gene loci by recruiting UBTF and the RNA polymerase Pol I transcriptional machinery. Plays a role in embryonic development and prevention of aneuploidy. Involved in melanoma cell proliferation and survival. Associates with chromatin at DNA replication fork regions. Binds to single- and double-stranded DNAs. (Microbial infection) Required for bovine papillomavirus type 1 regulatory protein E2 loading onto mitotic chromosomes during DNA replication for the viral genome to be maintained and segregated. This is ATP-dependent DNA helicase DDX11 from Homo sapiens (Human).